Here is a 435-residue protein sequence, read N- to C-terminus: MDVMQAAGLIPATPPAPVLVAYSGGMDSAVLLHALAATDGYREAGLRAVHVHHGLHADADAWALHCQQQCADLGIALQVVRVQVARDSGSGLEAAARAARHAAFAATLAAGEWLALAHHRDDQAETFLLRALRASGPDGLAAMRPQRPFGPGTLWRPLLGHARADLAAYAQAHAVRWIDDPSNTDPQHERNFLRTQVLPALQQRWPLAADALARSAQLCGDASTLLHDDDVNLLPTVCNSAGALELQPLRSHSPARRARLLRAWVAAAHAPPLPAQGVHALEREIATTQPDRQTCFAWQQTEIRRWRQQLYLLSARATWPAQWQAEWNGDSTLLLPDGAQLQLRGTPGLRFEQPLQVRARQGGERIVLPGRTHSHQLKHLLQQSDLPPWERTRLPLLWAGKTLLAAGDQIVSAKLDQWLRAHAARLQWRSAAPAN.

ATP is bound at residue 23 to 28 (SGGMDS).

It belongs to the tRNA(Ile)-lysidine synthase family.

The protein resides in the cytoplasm. The enzyme catalyses cytidine(34) in tRNA(Ile2) + L-lysine + ATP = lysidine(34) in tRNA(Ile2) + AMP + diphosphate + H(+). Ligates lysine onto the cytidine present at position 34 of the AUA codon-specific tRNA(Ile) that contains the anticodon CAU, in an ATP-dependent manner. Cytidine is converted to lysidine, thus changing the amino acid specificity of the tRNA from methionine to isoleucine. This chain is tRNA(Ile)-lysidine synthase, found in Xanthomonas campestris pv. campestris (strain 8004).